A 118-amino-acid polypeptide reads, in one-letter code: Beta-2-microglobulin (118 aa).

The first 20 residues, 1-20, serve as a signal peptide directing secretion; the sequence is MARFVVLVLLGLLYLSHLDA. The region spanning 25–113 is the Ig-like C1-type domain; that stretch reads PKVQVYSRHP…TTLSEPKVVK (89 aa). A disulfide bridge connects residues cysteine 45 and cysteine 99.

The protein belongs to the beta-2-microglobulin family. In terms of assembly, heterodimer of an alpha chain and a beta chain. Beta-2-microglobulin is the beta-chain of major histocompatibility complex class I molecules.

The protein localises to the secreted. Its function is as follows. Component of the class I major histocompatibility complex (MHC). Involved in the presentation of peptide antigens to the immune system. The sequence is that of Beta-2-microglobulin (B2M) from Felis catus (Cat).